The primary structure comprises 486 residues: 3-sulfolactaldehyde dehydrogenase (486 aa).

NADP(+) is bound by residues tryptophan 157–asparagine 158, arginine 181–serine 184, and glycine 234–serine 235. Glutamate 256 (proton acceptor) is an active-site residue. Residue leucine 257 coordinates NADP(+). The Nucleophile role is filled by cysteine 290. NADP(+) is bound at residue glutamate 387.

Belongs to the aldehyde dehydrogenase family.

The enzyme catalyses (2S)-3-sulfolactaldehyde + NADP(+) + H2O = (2S)-3-sulfolactate + NADPH + 2 H(+). It carries out the reaction (2S)-3-sulfolactaldehyde + NAD(+) + H2O = (2S)-3-sulfolactate + NADH + 2 H(+). Catalyzes the oxidation of (2S)-3-sulfolactaldehyde to (2S)-3-sulfolactate, using both NAD(+) and NADP(+) as electron acceptors. Is involved in a degradation pathway of sulfoquinovose (SQ) that allows P.putida SQ1 to use SQ as the sole carbon and energy source for growth. The sequence is that of 3-sulfolactaldehyde dehydrogenase from Pseudomonas putida (Arthrobacter siderocapsulatus).